The chain runs to 496 residues: Glycylpeptide N-tetradecanoyltransferase 1 (496 aa).

Positions 1–82 (MADESETAVK…SAQDQPVKMN (82 aa)) are disordered. 2 positions are modified to phosphoserine: Ser-31 and Ser-47. Basic residues predominate over residues 55 to 66 (KKKKKKQKKKKE). Residue Ser-83 is modified to Phosphoserine. Residues Gln-118, Phe-119, Trp-120, Phe-247, Leu-248, Cys-249, Val-250, Ser-256, Arg-258, Val-259, and Ala-260 each coordinate tetradecanoyl-CoA.

It belongs to the NMT family. As to expression, heart, gut, kidney, liver and placenta.

The protein resides in the cytoplasm. It localises to the cytosol. The protein localises to the membrane. It carries out the reaction N-terminal glycyl-[protein] + tetradecanoyl-CoA = N-tetradecanoylglycyl-[protein] + CoA + H(+). The catalysed reaction is N-terminal glycyl-L-lysyl-[protein] + tetradecanoyl-CoA = N-terminal glycyl-(N(6)-tetradecanoyl)-L-lysyl-[protein] + CoA + H(+). Functionally, adds a myristoyl group to the N-terminal glycine residue of certain cellular and viral proteins. Also able to mediate N-terminal lysine myristoylation of proteins: catalyzes myristoylation of ARF6 on both 'Gly-2' and 'Lys-3'. Lysine myristoylation is required to maintain ARF6 on membranes during the GTPase cycle. This Homo sapiens (Human) protein is Glycylpeptide N-tetradecanoyltransferase 1.